The chain runs to 451 residues: Methylenetetrahydrofolate--tRNA-(uracil-5-)-methyltransferase TrmFO (451 aa).

9-14 (GGGMAG) contributes to the FAD binding site.

Belongs to the MnmG family. TrmFO subfamily. The cofactor is FAD.

Its subcellular location is the cytoplasm. The catalysed reaction is uridine(54) in tRNA + (6R)-5,10-methylene-5,6,7,8-tetrahydrofolate + NADH + H(+) = 5-methyluridine(54) in tRNA + (6S)-5,6,7,8-tetrahydrofolate + NAD(+). The enzyme catalyses uridine(54) in tRNA + (6R)-5,10-methylene-5,6,7,8-tetrahydrofolate + NADPH + H(+) = 5-methyluridine(54) in tRNA + (6S)-5,6,7,8-tetrahydrofolate + NADP(+). Catalyzes the folate-dependent formation of 5-methyl-uridine at position 54 (M-5-U54) in all tRNAs. This Dinoroseobacter shibae (strain DSM 16493 / NCIMB 14021 / DFL 12) protein is Methylenetetrahydrofolate--tRNA-(uracil-5-)-methyltransferase TrmFO.